Here is a 1382-residue protein sequence, read N- to C-terminus: Hepatocyte growth factor receptor (1382 aa).

A signal peptide spans 1-24 (MKASAVLAPGILALLFTLVQGSDG). Residues 25–935 (ECHEALAKSE…VQPDQNFTGL (911 aa)) are Extracellular-facing. In terms of domain architecture, Sema spans 27–516 (HEALAKSEMN…TGKRITKIPL (490 aa)). Asn-45, Asn-100, and Asn-106 each carry an N-linked (GlcNAc...) asparagine glycan. 4 cysteine pairs are disulfide-bonded: Cys-95/Cys-101, Cys-98/Cys-160, Cys-133/Cys-141, and Cys-173/Cys-176. N-linked (GlcNAc...) asparagine glycans are attached at residues Asn-203 and Asn-359. Intrachain disulfides connect Cys-299–Cys-364 and Cys-386–Cys-398. N-linked (GlcNAc...) asparagine glycans are attached at residues Asn-400 and Asn-406. Intrachain disulfides connect Cys-521-Cys-539, Cys-527-Cys-562, Cys-530-Cys-546, and Cys-542-Cys-552. 3 consecutive IPT/TIG domains span residues 564–656 (PAIH…FSYV), 658–740 (PVIT…FSYQ), and 743–837 (PVVY…LIYV). A glycan (O-linked (Man) threonine) is linked at Thr-583. N-linked (GlcNAc...) asparagine glycans are attached at residues Asn-608 and Asn-636. Residues Thr-677 and Thr-762 are each glycosylated (O-linked (Man) threonine). 3 N-linked (GlcNAc...) asparagine glycosylation sites follow: Asn-786, Asn-880, and Asn-931. Residues 936-956 (IVGVVSISIILLLLLGLFLWM) form a helical membrane-spanning segment. Residues 957 to 1382 (KKRKQIKDLG…QDNINGEVDT (426 aa)) lie on the Cytoplasmic side of the membrane. Ser-967 bears the Phosphoserine mark. Thr-978 carries the post-translational modification Phosphothreonine. Phosphoserine is present on residues Ser-991, Ser-998, and Ser-1001. The residue at position 1004 (Tyr-1004) is a Phosphotyrosine. One can recognise a Protein kinase domain in the interval 1079-1346 (VHFNEVIGRG…RISAIFSTFI (268 aa)). Residues 1085 to 1093 (IGRGHFGCV) and Lys-1111 contribute to the ATP site. Asp-1205 acts as the Proton acceptor in catalysis. The tract at residues 1213–1382 (LDEKFTVKVA…QDNINGEVDT (170 aa)) is interaction with RANBP9. Tyr-1231 carries the phosphotyrosine modification. Phosphotyrosine; by autocatalysis is present on residues Tyr-1235 and Tyr-1236. Phosphothreonine is present on Thr-1290. The interval 1321–1360 (WHPKAEMRPSFSELVSRISAIFSTFIGEHYVHVNATYVNV) is interaction with MUC20. Phosphotyrosine; by autocatalysis is present on residues Tyr-1350 and Tyr-1357. Phosphotyrosine is present on Tyr-1366.

This sequence belongs to the protein kinase superfamily. Tyr protein kinase family. Heterodimer made of an alpha chain (50 kDa) and a beta chain (145 kDa) which are disulfide linked. Binds PLXNB1. Interacts when phosphorylated with downstream effectors including STAT3, PIK3R1, SRC, PCLG1, GRB2 and GAB1. Interacts with SPSB1, SPSB2 and SPSB4. Interacts with INPP5D/SHIP1. When phosphorylated at Tyr-1357, interacts with INPPL1/SHIP2. Interacts with RANBP9 and RANBP10, as well as SPSB1, SPSB2, SPSB3 and SPSB4. SPSB1 binding occurs in the presence and in the absence of HGF, however HGF treatment has a positive effect on this interaction. Interacts with MUC20; prevents interaction with GRB2 and suppresses hepatocyte growth factor-induced cell proliferation. Interacts with GRB10. Interacts with PTPN1 and PTPN2. Interacts with HSP90AA1 and HSP90AB1; the interaction suppresses MET kinase activity. Interacts with tensin TNS3. Interacts (when phosphorylated) with tensin TNS4 (via SH2 domain); the interaction increases MET protein stability by inhibiting MET endocytosis and subsequent lysosomal degradation. Autophosphorylated in response to ligand binding on Tyr-1235 and Tyr-1236 in the kinase domain leading to further phosphorylation of Tyr-1350 and Tyr-1357 in the C-terminal multifunctional docking site. Dephosphorylated by PTPRJ at Tyr-1350 and Tyr-1366. Dephosphorylated by PTPN1 and PTPN2. In terms of processing, ubiquitinated. Ubiquitination by CBL regulates the receptor stability and activity through proteasomal degradation. Post-translationally, O-mannosylation of IPT/TIG domains by TMEM260 is required for protein maturation. O-mannosylated residues are composed of single mannose glycans that are not elongated or modified.

It localises to the membrane. The enzyme catalyses L-tyrosyl-[protein] + ATP = O-phospho-L-tyrosyl-[protein] + ADP + H(+). In its inactive state, the C-terminal tail interacts with the catalytic domain and inhibits the kinase activity. Upon ligand binding, the C-terminal tail is displaced and becomes phosphorylated, thus increasing the kinase activity. Receptor tyrosine kinase that transduces signals from the extracellular matrix into the cytoplasm by binding to hepatocyte growth factor/HGF ligand. Regulates many physiological processes including proliferation, scattering, morphogenesis and survival. Ligand binding at the cell surface induces autophosphorylation of MET on its intracellular domain that provides docking sites for downstream signaling molecules. Following activation by ligand, interacts with the PI3-kinase subunit PIK3R1, PLCG1, SRC, GRB2, STAT3 or the adapter GAB1. Recruitment of these downstream effectors by MET leads to the activation of several signaling cascades including the RAS-ERK, PI3 kinase-AKT, or PLCgamma-PKC. The RAS-ERK activation is associated with the morphogenetic effects while PI3K/AKT coordinates prosurvival effects. During embryonic development, MET signaling plays a role in gastrulation, development and migration of muscles and neuronal precursors, angiogenesis and kidney formation. In adults, participates in wound healing as well as organ regeneration and tissue remodeling. Also promotes differentiation and proliferation of hematopoietic cells. This chain is Hepatocyte growth factor receptor (MET), found in Microcebus murinus (Gray mouse lemur).